An 89-amino-acid chain; its full sequence is Small ribosomal subunit protein uS14 (89 aa).

This sequence belongs to the universal ribosomal protein uS14 family. Part of the 30S ribosomal subunit. Contacts proteins S3 and S10.

Functionally, binds 16S rRNA, required for the assembly of 30S particles and may also be responsible for determining the conformation of the 16S rRNA at the A site. This Chlorobium chlorochromatii (strain CaD3) protein is Small ribosomal subunit protein uS14.